The sequence spans 449 residues: Adenylosuccinate synthetase isozyme 1 A (449 aa).

Residues 1–10 (MSHKSCYTNP) show a composition bias toward polar residues. Residues 1–22 (MSHKSCYTNPGTGGKRPRNDKG) form a disordered region. GTP-binding positions include 34–40 (GDEGKGK) and 62–64 (GHT). The active-site Proton acceptor is Asp-35. The Mg(2+) site is built by Asp-35 and Gly-62. Substrate is bound at residue Asp-35. IMP contacts are provided by residues 35–38 (DEGK), 60–63 (NAGH), Thr-155, Arg-169, Asn-248, Thr-263, and Arg-327. Residue His-63 is the Proton donor of the active site. Residue 323 to 329 (VTTGRKR) participates in substrate binding. GTP-binding positions include Arg-329, 355–357 (KLD), and 437–440 (GVGK).

This sequence belongs to the adenylosuccinate synthetase family. Homodimer. Requires Mg(2+) as cofactor.

The protein localises to the cytoplasm. The catalysed reaction is IMP + L-aspartate + GTP = N(6)-(1,2-dicarboxyethyl)-AMP + GDP + phosphate + 2 H(+). It participates in purine metabolism; AMP biosynthesis via de novo pathway; AMP from IMP: step 1/2. Functionally, component of the purine nucleotide cycle (PNC), which interconverts IMP and AMP to regulate the nucleotide levels in various tissues, and which contributes to glycolysis and ammoniagenesis. Catalyzes the first committed step in the biosynthesis of AMP from IMP. This chain is Adenylosuccinate synthetase isozyme 1 A (adss1a), found in Salmo salar (Atlantic salmon).